The chain runs to 481 residues: OTU domain-containing protein 1 (481 aa).

Disordered regions lie at residues P18 to E60 and L202 to R282. Residues P38–A58 show a composition bias toward low complexity. Basic and acidic residues predominate over residues G225 to P257. Over residues A261–S281 the composition is skewed to low complexity. Positions K309 to H438 constitute an OTU domain. The tract at residues I314–C320 is cys-loop. The active site involves D317. C320 serves as the catalytic Nucleophile. The tract at residues A369–P379 is his-loop. The tract at residues W426–H431 is variable-loop. Residue H431 is part of the active site. Residues K457–E476 form the UIM domain.

It carries out the reaction Thiol-dependent hydrolysis of ester, thioester, amide, peptide and isopeptide bonds formed by the C-terminal Gly of ubiquitin (a 76-residue protein attached to proteins as an intracellular targeting signal).. In terms of biological role, deubiquitinating enzyme that specifically hydrolyzes 'Lys-63'-linked polyubiquitin to monoubiquitin. Required for the stability and translation of a subset mRNAs with a high abundance of rare codons by mediating deubiquitination of 40S ribosomal protein RPS10/eS10, thereby antagonizing ZNF598-mediated 40S ubiquitination. The abundance of rare codons in mRNAs can limit the translation rate and can lead to ribosome collisions that trigger activation of ribosome quality control (RQC) pathway by ZNF598. OTUD1-mediated deubiquitination prevents activation of the RQC and subsequent dissociation of ribosomes and stimulates formation of polysomes and translation. This is OTU domain-containing protein 1 from Homo sapiens (Human).